A 396-amino-acid chain; its full sequence is Elongation factor Tu (396 aa).

Residues 10–206 form the tr-type G domain; the sequence is KPHVNVGTIG…ALDDYIPEPE (197 aa). The segment at 19-26 is G1; that stretch reads GHVDHGKT. Residue 19–26 participates in GTP binding; that stretch reads GHVDHGKT. Thr26 provides a ligand contact to Mg(2+). Residues 60–64 form a G2 region; it reads GITIA. The G3 stretch occupies residues 81–84; it reads DCPG. GTP is bound by residues 81–85 and 136–139; these read DCPGH and NKAD. A G4 region spans residues 136–139; it reads NKAD. Positions 174–176 are G5; sequence SAL.

Belongs to the TRAFAC class translation factor GTPase superfamily. Classic translation factor GTPase family. EF-Tu/EF-1A subfamily. In terms of assembly, monomer.

The protein localises to the cytoplasm. The enzyme catalyses GTP + H2O = GDP + phosphate + H(+). Functionally, GTP hydrolase that promotes the GTP-dependent binding of aminoacyl-tRNA to the A-site of ribosomes during protein biosynthesis. This Methylococcus capsulatus (strain ATCC 33009 / NCIMB 11132 / Bath) protein is Elongation factor Tu.